Reading from the N-terminus, the 369-residue chain is Probable methyltransferase TCM_000331 (369 aa).

S-adenosyl-L-homocysteine contacts are provided by tyrosine 18, cysteine 60, asparagine 65, aspartate 98, leucine 99, serine 137, and phenylalanine 138. The Mg(2+) site is built by asparagine 176, aspartate 261, phenylalanine 263, and asparagine 264.

It belongs to the methyltransferase superfamily. Type-7 methyltransferase family. It depends on Mg(2+) as a cofactor.

The protein is Probable methyltransferase TCM_000331 of Theobroma cacao (Cacao).